Consider the following 180-residue polypeptide: NADH-quinone oxidoreductase subunit B (180 aa).

Positions 59, 60, 124, and 154 each coordinate [4Fe-4S] cluster.

The protein belongs to the complex I 20 kDa subunit family. NDH-1 is composed of 14 different subunits. Subunits NuoB, C, D, E, F, and G constitute the peripheral sector of the complex. It depends on [4Fe-4S] cluster as a cofactor.

The protein localises to the cell inner membrane. It carries out the reaction a quinone + NADH + 5 H(+)(in) = a quinol + NAD(+) + 4 H(+)(out). In terms of biological role, NDH-1 shuttles electrons from NADH, via FMN and iron-sulfur (Fe-S) centers, to quinones in the respiratory chain. The immediate electron acceptor for the enzyme in this species is believed to be ubiquinone. Couples the redox reaction to proton translocation (for every two electrons transferred, four hydrogen ions are translocated across the cytoplasmic membrane), and thus conserves the redox energy in a proton gradient. The sequence is that of NADH-quinone oxidoreductase subunit B from Beijerinckia indica subsp. indica (strain ATCC 9039 / DSM 1715 / NCIMB 8712).